The primary structure comprises 136 residues: Histone H2A (136 aa).

Over residues 1–11 the composition is skewed to gly residues; sequence MTGGKSAGGKA. Residues 1 to 23 form a disordered region; it reads MTGGKSAGGKAGTTKNAQSRSSK. N6-acetyllysine is present on residues Lys5 and Lys10. An N5-methylglutamine modification is found at Gln107. Position 133 is a phosphoserine (Ser133). The [ST]-Q motif motif lies at 133 to 134; it reads SQ.

It belongs to the histone H2A family. As to quaternary structure, the nucleosome is a histone octamer containing two molecules each of H2A, H2B, H3 and H4 assembled in one H3-H4 heterotetramer and two H2A-H2B heterodimers. The octamer wraps approximately 147 bp of DNA. Phosphorylated to form H2AS128ph (gamma-H2A) in response to DNA double-strand breaks (DSBs) generated by exogenous genotoxic agents and by stalled replication forks. Phosphorylation is dependent on the DNA damage checkpoint kinases MEC1/ATR and TEL1/ATM, spreads on either side of a detected DSB site and may mark the surrounding chromatin for recruitment of proteins required for DNA damage signaling and repair. Gamma-H2A is removed from the DNA prior to the strand invasion-primer extension step of the repair process and subsequently dephosphorylated. Dephosphorylation is necessary for efficient recovery from the DNA damage checkpoint. In terms of processing, acetylated by ESA1 to form H2AK4ac and H2AK7ac.

The protein resides in the nucleus. The protein localises to the chromosome. Functionally, core component of nucleosome which plays a central role in DNA double strand break (DSB) repair. Nucleosomes wrap and compact DNA into chromatin, limiting DNA accessibility to the cellular machineries which require DNA as a template. Histones thereby play a central role in transcription regulation, DNA repair, DNA replication and chromosomal stability. DNA accessibility is regulated via a complex set of post-translational modifications of histones, also called histone code, and nucleosome remodeling. The protein is Histone H2A (hta1) of Botryotinia fuckeliana (strain B05.10) (Noble rot fungus).